A 309-amino-acid chain; its full sequence is Assembly-complementing factor 4 (309 aa).

3 disordered regions span residues 1–80 (MSED…ASPI), 164–240 (KSIN…ENTP), and 286–309 (VRSEDEDDEEFEPMGDIPVHLFKR). Basic and acidic residues-rich tracts occupy residues 13–24 (ELHKLSIVDKHS) and 34–44 (KQHEVQPESKS). Residues serine 44, serine 71, serine 74, serine 78, and serine 165 each carry the phosphoserine modification. The segment covering 61 to 80 (SSPQRSTTNQSPVSDHASPI) has biased composition (polar residues). Composition is skewed to low complexity over residues 174 to 188 (NNNVNSNINNTLPNR), 205 to 214 (PSRSSESTPT), and 222 to 239 (PRNTMKNANTTATAGENT). Over residues 287-298 (RSEDEDDEEFEP) the composition is skewed to acidic residues. A Phosphoserine modification is found at serine 288.

In terms of biological role, may be involved in actin cytoskeleton organization and biogenesis. This Saccharomyces cerevisiae (strain ATCC 204508 / S288c) (Baker's yeast) protein is Assembly-complementing factor 4 (ACF4).